The primary structure comprises 637 residues: Epithelial sodium channel subunit alpha (637 aa).

Residues M1–E34 are disordered. At M1–T76 the chain is on the cytoplasmic side. Residues K11–E34 are compositionally biased toward basic and acidic residues. A helical membrane pass occupies residues A77–L97. At Y98–S548 the chain is on the extracellular side. 10 disulfides stabilise this stretch: C125-C292, C217-C224, C269-C276, C380-C465, C402-C442, C402-C461, C406-C457, C415-C442, C415-C465, and C417-C431. The chain crosses the membrane as a helical span at residues V549–L569. Over A570–E637 the chain is Cytoplasmic.

This sequence belongs to the amiloride-sensitive sodium channel (TC 1.A.6) family. SCNN1A subfamily. Heterotrimer; containing an alpha/SCNN1A, a beta/SCNN1B and a gamma/SCNN1G subunit. In terms of tissue distribution, the long isoform has been found in cochlea, colon, and cartilage. The short isoform is only found in cochlea.

The protein resides in the apical cell membrane. The protein localises to the cell projection. Its subcellular location is the cilium. It is found in the cytoplasmic granule. It localises to the cytoplasm. The protein resides in the cytoplasmic vesicle. The protein localises to the secretory vesicle. Its subcellular location is the acrosome. It is found in the flagellum. The enzyme catalyses Na(+)(in) = Na(+)(out). Originally identified and characterized by its inhibition by the diuretic drug amiloride. In terms of biological role, this is one of the three pore-forming subunits of the heterotrimeric epithelial sodium channel (ENaC), a critical regulator of sodium balance and fluid homeostasis. ENaC operates in epithelial tissues, where it mediates the electrodiffusion of sodium ions from extracellular fluid through the apical membrane of cells, with water following osmotically. This chain is Epithelial sodium channel subunit alpha, found in Gallus gallus (Chicken).